The chain runs to 393 residues: Arginine biosynthesis bifunctional protein ArgJ 3 (393 aa).

Positions 148, 170, 181, 260, 388, and 393 each coordinate substrate. Thr-181 serves as the catalytic Nucleophile.

The protein belongs to the ArgJ family. In terms of assembly, heterotetramer of two alpha and two beta chains.

The protein localises to the cytoplasm. It catalyses the reaction N(2)-acetyl-L-ornithine + L-glutamate = N-acetyl-L-glutamate + L-ornithine. It carries out the reaction L-glutamate + acetyl-CoA = N-acetyl-L-glutamate + CoA + H(+). It functions in the pathway amino-acid biosynthesis; L-arginine biosynthesis; L-ornithine and N-acetyl-L-glutamate from L-glutamate and N(2)-acetyl-L-ornithine (cyclic): step 1/1. The protein operates within amino-acid biosynthesis; L-arginine biosynthesis; N(2)-acetyl-L-ornithine from L-glutamate: step 1/4. Functionally, catalyzes two activities which are involved in the cyclic version of arginine biosynthesis: the synthesis of N-acetylglutamate from glutamate and acetyl-CoA as the acetyl donor, and of ornithine by transacetylation between N(2)-acetylornithine and glutamate. This chain is Arginine biosynthesis bifunctional protein ArgJ 3, found in Streptomyces clavuligerus.